Reading from the N-terminus, the 1070-residue chain is MKGKNRSLFVLLVLLLLHKVNNVLLERTIETLLECKNEYVKGENGYKLAKGHHCVEEDNLERWLQGTNERRSEENIKYKYGVTELKIKYAQMNGKRSSRILKESIYGAHNFGGNSYMEGKDGGDKTGEEKDGEHKTDSKTDNGKGANNLVMLDYETSSNGQPAGTLDNVLEFVTGHEGNSRKNSSNGGNPYDIDHKKTISSAIINHAFLQNTVMKNCNYKRKRRERDWDCNTKKDVCIPDRRYQLCMKELTNLVNNTDTNFHRDITFRKLYLKRKLIYDAAVEGDLLLKLNNYRYNKDFCKDIRWSLGDFGDIIMGTDMEGIGYSKVVENNLRSIFGTDEKAQQRRKQWWNESKAQIWTAMMYSVKKRLKGNFIWICKLNVAVNIEPQIYRWIREWGRDYVSELPTEVQKLKEKCDGKINYTDKKVCKVPPCQNACKSYDQWITRKKNQWDVLSNKFISVKNAEKVQTAGIVTPYDILKQELDEFNEVAFENEINKRDGAYIELCVCSVEEAKKNTQEVVTNVDNAAKSQATNSNPISQPVDSSKAEKVPGDSTHGNVNSGQDSSTTGKAVTGDGQNGNQTPAESDVQRSDIAESVSAKNVDPQKSVSKRSDDTASVTGIAEAGKENLGASNSRPSESTVEANSPGDDTVNSASIPVVSGENPLVTPYNGLRHSKDNSDSDGPAESMANPDSNSKGETGKGQDNDMAKATKDSSNSSDGTSSATGDTTDAVDREINKGVPEDRDKTVGSKDGGGEDNSANKDAATVVGEDRIRENSAGGSTNDRSKNDTEKNGASTPDSKQSEDATALSKTESLESTESGDRTTNDTTNSLENKNGGKEKDLQKHDFKSNDTPNEEPNSDQTTDAEGHDRDSIKNDKAERRKHMNKDTFTKNTNSHHLNSNNNLSNGKLDIKEYKYRDVKATREDIILMSSVRKCNNNISLEYCNSVEDKISSNTCSREKSKNLCCSISDFCLNYFDVYSYEYLSCMKKEFEDPSYKCFTKGGFKDKTYFAAAGALLILLLLIASRKMIKNDSEEATFNEFEEYCDNIHRIPLMPNNIEHMQPSTPLDYS.

Positions 1-20 (MKGKNRSLFVLLVLLLLHKV) are cleaved as a signal peptide. Residues 21-1007 (NNVLLERTIE…CFTKGGFKDK (987 aa)) are Extracellular-facing. Residues 116 to 146 (YMEGKDGGDKTGEEKDGEHKTDSKTDNGKGA) are disordered. Residues 118–142 (EGKDGGDKTGEEKDGEHKTDSKTDN) show a composition bias toward basic and acidic residues. Asn-183 carries N-linked (GlcNAc...) asparagine glycosylation. Residues 211-521 (NTVMKNCNYK…AKKNTQEVVT (311 aa)) form a pvRII region; mediates ACKR1 binding region. Cystine bridges form between Cys-217/Cys-246 and Cys-230/Cys-237. 3 N-linked (GlcNAc...) asparagine glycosylation sites follow: Asn-255, Asn-351, and Asn-420. 4 disulfide bridges follow: Cys-300-Cys-377, Cys-415-Cys-432, Cys-427-Cys-507, and Cys-436-Cys-505. 3 stretches are compositionally biased toward polar residues: residues 525-542 (NAAK…QPVD), 554-569 (THGN…TTGK), and 629-642 (GASN…TVEA). A disordered region spans residues 525-906 (NAAKSQATNS…HLNSNNNLSN (382 aa)). The span at 697 to 711 (ETGKGQDNDMAKATK) shows a compositional bias: basic and acidic residues. Residues 712–728 (DSSNSSDGTSSATGDTT) show a composition bias toward low complexity. An N-linked (GlcNAc...) asparagine glycan is attached at Asn-715. Residues 730 to 748 (AVDREINKGVPEDRDKTVG) are compositionally biased toward basic and acidic residues. A glycan (N-linked (GlcNAc...) asparagine) is linked at Asn-787. Residues 808–817 (LSKTESLEST) show a composition bias toward low complexity. N-linked (GlcNAc...) asparagine glycosylation is present at Asn-825. Basic and acidic residues-rich tracts occupy residues 835–849 (NGGK…DFKS) and 865–889 (AEGH…KDTF). Positions 895 to 906 (SHHLNSNNNLSN) are enriched in low complexity. 2 N-linked (GlcNAc...) asparagine glycosylation sites follow: Asn-903 and Asn-938. A helical transmembrane segment spans residues 1008-1025 (TYFAAAGALLILLLLIAS). The Cytoplasmic segment spans residues 1026-1070 (RKMIKNDSEEATFNEFEEYCDNIHRIPLMPNNIEHMQPSTPLDYS).

Homodimer; dimerization (via PvRII region) is promoted by the interaction with human ACKR1. Interacts (via PvRII region) with human ACKR1 (via N-terminal extracellular domain).

Its subcellular location is the membrane. In terms of biological role, binds to the human erythrocyte Duffy blood group determinant (ACKR1). This is Duffy receptor (PVDR) from Plasmodium vivax (strain Salvador I).